The sequence spans 153 residues: Histone H2A.Z-specific chaperone CHZ1 (153 aa).

A compositionally biased stretch (basic and acidic residues) spans 1–29; that stretch reads MSDEAKEKRELESQKESSHNKSEKSVEPK. A disordered region spans residues 1 to 153; that stretch reads MSDEAKEKRE…EDEEDDDFKE (153 aa). The residue at position 2 (Ser2) is an N-acetylserine. The segment covering 56 to 65 has biased composition (polar residues); the sequence is LTKSENNGTV. 2 positions are modified to phosphoserine: Ser68 and Ser70. Over residues 84–94 the composition is skewed to acidic residues; the sequence is EGEEEEDDLAE. The segment at 87–108 is important for H2A.Z-H2B binding; sequence EEEDDLAEIDTSNIITSGRRTR. Residues 110–138 are compositionally biased toward basic and acidic residues; sequence KVIDYKKTAEELDKKEPSTGSKDDVGYGE. Acidic residues predominate over residues 139 to 153; that stretch reads KEEDDEDEEDDDFKE.

It belongs to the CHZ1 family. Forms a heterotrimer with H2A.Z-H2B, stabilizing the association of the histone dimer. Also, with a lower affinity, forms a heterotrimer with H2A-H2B.

It localises to the nucleus. Forms a chaperone-bound H2A.Z-H2B complex that acts as a source for SWR1 complex-dependent H2A to H2A.Z histone replacement in chromatin. This is Histone H2A.Z-specific chaperone CHZ1 (CHZ1) from Saccharomyces cerevisiae (strain ATCC 204508 / S288c) (Baker's yeast).